The sequence spans 176 residues: Imidazoleglycerol-phosphate dehydratase (176 aa).

Belongs to the imidazoleglycerol-phosphate dehydratase family.

It localises to the cytoplasm. It carries out the reaction D-erythro-1-(imidazol-4-yl)glycerol 3-phosphate = 3-(imidazol-4-yl)-2-oxopropyl phosphate + H2O. The protein operates within amino-acid biosynthesis; L-histidine biosynthesis; L-histidine from 5-phospho-alpha-D-ribose 1-diphosphate: step 6/9. The chain is Imidazoleglycerol-phosphate dehydratase from Pyrococcus furiosus (strain ATCC 43587 / DSM 3638 / JCM 8422 / Vc1).